A 435-amino-acid polypeptide reads, in one-letter code: Keratin, type I cytoskeletal 18 (435 aa).

Residues 1–28 (MSLRSSYSVRSSTSQVPVSQMSQMSQMS) show a composition bias toward low complexity. The interval 1 to 36 (MSLRSSYSVRSSTSQVPVSQMSQMSQMSIKRTTNVP) is disordered. A head region spans residues 2–88 (SLRSSYSVRS…TGATGDIMGN (87 aa)). Residues 89 to 123 (EKMAMQNLNDRLASYLRSETLEQANSKLELKIREA) form a coil 1A region. The IF rod domain maps to 89–399 (EKMAMQNLND…RLLDGGDFKL (311 aa)). A linker 1 region spans residues 124-140 (LEKKGPEVCDYSRFQPI). Residues 141–232 (IDDLRRKIFD…KNHDNEVMEL (92 aa)) form a coil 1B region. Residues 233–256 (RNQISHSGVQVDVDAPKGQDLAKI) form a linker 12 region. A coil 2 region spans residues 257–394 (MEEIRSKYEK…IATYRRLLDG (138 aa)). The tail stretch occupies residues 395-435 (GDFKLQDALEEQKRVKVMTVTQTLVDGKVVSSSTETKEKKF).

This sequence belongs to the intermediate filament family. Heterotetramer of two type I and two type II keratins. Keratin-18 associates with keratin-8. In terms of processing, phosphorylated. Post-translationally, proteolytically cleaved by caspases during epithelial cell apoptosis. As to expression, abundantly expressed in an even distribution throughout the optic nerve, localizing specifically to the astrocyte domains. Moderately expressed in spinal cord, brain, liver and oocytes.

Its function is as follows. When phosphorylated, plays a role in filament reorganization. The chain is Keratin, type I cytoskeletal 18 (krt18) from Carassius auratus (Goldfish).